Reading from the N-terminus, the 622-residue chain is Auxin efflux carrier component 1 (622 aa).

The Extracellular portion of the chain corresponds to 1–6; that stretch reads MITAAD. The helical transmembrane segment at 7–27 threads the bilayer; the sequence is FYHVMTAMVPLYVAMILAYGS. Topologically, residues 28–44 are cytoplasmic; that stretch reads VKWWKIFTPDQCSGINR. The chain crosses the membrane as a helical span at residues 45-65; that stretch reads FVALFAVPLLSFHFIAANNPY. Val-51 provides a ligand contact to (indol-3-yl)acetate. Residues 66–70 lie on the Extracellular side of the membrane; the sequence is AMNLR. The chain crosses the membrane as a helical span at residues 71–91; sequence FLAADSLQKVIVLSLLFLWCK. Residues 92–100 are Cytoplasmic-facing; sequence LSRNGSLDW. Residues 101-121 form a helical membrane-spanning segment; sequence TITLFSLSTLPNTLVMGIPLL. Positions 112 and 114 each coordinate (indol-3-yl)acetate. The Extracellular segment spans residues 122–131; it reads KGMYGNFSGD. A glycan (N-linked (GlcNAc...) asparagine) is linked at Asn-127. A helical transmembrane segment spans residues 132–152; the sequence is LMVQIVVLQCIIWYTLMLFLF. Tyr-145 provides a ligand contact to (indol-3-yl)acetate. Topologically, residues 153–482 are cytoplasmic; sequence EYRGAKLLIS…LIRNPNSYSS (330 aa). Residues Ser-209, Ser-212, Ser-221, and Ser-225 each carry the phosphoserine modification. The disordered stretch occupies residues 213-233; that stretch reads RSDIYSRRSQGLSATPRPSNL. Thr-227 is modified (phosphothreonine). A Phosphoserine modification is found at Ser-231. Position 248 is a phosphothreonine (Thr-248). Phosphoserine occurs at positions 252, 253, and 271. Residues 268–362 form a disordered region; the sequence is GRNSNFGPGE…PVVGGKRQDG (95 aa). A Phosphothreonine modification is found at Thr-286. The residue at position 290 (Ser-290) is a Phosphoserine. The span at 298–311 shows a compositional bias: low complexity; that stretch reads PAKPTAAGTAAGAG. Thr-302 bears the Phosphothreonine mark. Residues Ser-317, Ser-320, and Ser-337 each carry the phosphoserine modification. Position 340 is a phosphothreonine (Thr-340). Ser-374, Ser-377, Ser-408, Ser-414, Ser-426, Ser-434, and Ser-446 each carry phosphoserine. Residues 483–503 form a helical membrane-spanning segment; that stretch reads LFGITWSLISFKWNIEMPALI. Residues 504-506 lie on the Extracellular side of the membrane; that stretch reads AKS. A helical transmembrane segment spans residues 507–527; the sequence is ISILSDAGLGMAMFSLGLFMA. The Cytoplasmic segment spans residues 528–541; the sequence is LNPRIIACGNRRAA. A helical transmembrane segment spans residues 542-562; it reads FAAAMRFVVGPAVMLVASYAV. Over 563-566 the chain is Extracellular; sequence GLRG. Residues 567–587 traverse the membrane as a helical segment; sequence VLLHVAIIQAALPQGIVPFVF. Positions 582 and 583 each coordinate (indol-3-yl)acetate. The Cytoplasmic portion of the chain corresponds to 588 to 601; the sequence is AKEYNVHPDILSTA. Residues 602-622 traverse the membrane as a helical segment; the sequence is VIFGMLIALPITLLYYILLGL.

This sequence belongs to the auxin efflux carrier (TC 2.A.69.1) family. In terms of assembly, homodimer. Interacts with TOPP4. Interacts with FYPP1 and FYPP3. Component of a complex made of PINs (e.g. PIN1 and PIN2), MAB4/MELs (e.g. NPY1/MAB4 and NPY5/MEL1) and AGC kinases (e.g. D6PK and PID) at the plasma membrane. Binds directly to NPY5/MEL1. Expressed at the basal side of elongated parenchymatous xylem cells.

The protein localises to the cell membrane. Its activity is regulated as follows. Auxin efflux carrier activity is competitively inhibited by naptalamate (N-1-naphthylphthalamic acid, NPA) but activated by D6PK-mediated phosphorylation. Functionally, acts as a component of the auxin efflux carrier; this activity is enhanced when activated by D6PK-mediated phosphorylation. Binds auxins including indole-3-acetic acid (IAA), indole-3-butyric acid (IBA), indole-3-propionic acid (IPA) and 4-chloroindole-3-acetic acid (4-Cl-IAA). Seems to be involved in the basipetal auxin transport. Mediates the formation of auxin gradient which is required to ensure correct organogenesis. Coordinated polar localization of PIN1 is directly regulated by the vesicle trafficking process and apical-basal PIN1 polarity also depends on the phosphorylation of conserved serine residues by PID kinase. The ARF-GEF protein GNOM is required for the correct recycling of PIN1 between the plasma membrane and endosomal compartments. Recrutes NPY proteins (e.g. NPY1/MAB4 and NPY5/MEL1) to the plasma membrane in a polar basal localization in root epidermis; this activity is optimized by AGC kinases-mediated (e.g. D6PK and PID) phosphorylation that limits their lateral diffusion-based escape. The chain is Auxin efflux carrier component 1 from Arabidopsis thaliana (Mouse-ear cress).